The primary structure comprises 374 residues: Glutamate 5-kinase (374 aa).

K16 contributes to the ATP binding site. Substrate is bound by residues S56, D143, and N155. Residues 175-176 (TD) and 217-223 (SGGMLTK) contribute to the ATP site. The PUA domain occupies 282–360 (RGALILDDGA…SNIGAILGYK (79 aa)).

Belongs to the glutamate 5-kinase family.

The protein resides in the cytoplasm. It carries out the reaction L-glutamate + ATP = L-glutamyl 5-phosphate + ADP. It participates in amino-acid biosynthesis; L-proline biosynthesis; L-glutamate 5-semialdehyde from L-glutamate: step 1/2. Catalyzes the transfer of a phosphate group to glutamate to form L-glutamate 5-phosphate. In Marinomonas sp. (strain MWYL1), this protein is Glutamate 5-kinase.